The primary structure comprises 307 residues: Zygote arrest protein 2.L (307 aa).

A disordered region spans residues 138-200 (LPQGGRLPKK…EEPGNEEQTK (63 aa)). The segment covering 156–186 (LKERAPSPEDKEREKVSEKEPDTKDELEKRP) has biased composition (basic and acidic residues). The 3CxxC-type zinc finger occupies 208 to 293 (QKYGYFHCKD…QELCGRCKNK (86 aa)).

It belongs to the ZAR1 family. As to expression, expressed in oocytes.

The protein resides in the cytoplasm. It is found in the cytoplasmic ribonucleoprotein granule. Functionally, mRNA-binding protein required for maternal mRNA storage, translation and degradation during oocyte maturation. Probably promotes formation of some phase-separated membraneless compartment that stores maternal mRNAs in oocytes: acts by undergoing liquid-liquid phase separation upon binding to maternal mRNAs. Binds to the 3'-UTR of maternal mRNAs, inhibiting their translation. The chain is Zygote arrest protein 2.L (zar2.L) from Xenopus laevis (African clawed frog).